Here is a 367-residue protein sequence, read N- to C-terminus: Probable butyrate kinase (367 aa).

Belongs to the acetokinase family.

It is found in the cytoplasm. The catalysed reaction is butanoate + ATP = butanoyl phosphate + ADP. The polypeptide is Probable butyrate kinase (Bacillus cereus (strain B4264)).